Here is a 155-residue protein sequence, read N- to C-terminus: Chromosomal passenger complex protein bir-1 (155 aa).

The stretch at arginine 20–arginine 87 is one BIR repeat. 4 residues coordinate Zn(2+): cysteine 57, cysteine 60, histidine 76, and cysteine 83.

This sequence belongs to the IAP family. In terms of assembly, component of the CPC complex which consists of icp-1; csc-1; bir-1 and air-2. Within the complex, interacts with csc-1, icp-1 and air-2. Interacts with csc-1 in a zinc-dependent-manner; the interaction is direct. Expressed in oocytes and sperm.

Its subcellular location is the chromosome. The protein localises to the cytoplasm. It is found in the cytoskeleton. The protein resides in the spindle. It localises to the midbody. Component of the chromosomal passenger complex (CPC), a complex that acts as a key regulator of chromosome segregation and cytokinesis. The CPC complex has essential functions at the centromere in ensuring correct chromosome condensation, alignment and segregation. In the complex, required to direct the Aurora B/air-2 kinase to chromosomes. Also functions in spindle midzone formation and in the formation of polar bodies during oogenesis. Required for the localization of the kinetochore component hcp-1 to chromosomes. Involved in the positive regulation of transcription. Involved in the transcriptional regulation of collagen genes. This chain is Chromosomal passenger complex protein bir-1, found in Caenorhabditis elegans.